We begin with the raw amino-acid sequence, 239 residues long: tRNA (guanine-N(7)-)-methyltransferase (239 aa).

E69, E94, D121, and D144 together coordinate S-adenosyl-L-methionine. D144 is a catalytic residue. K148 is a substrate binding site. Residues 150–155 (RHNKRR) are interaction with RNA. Residues D180 and 217–220 (TKFE) each bind substrate.

It belongs to the class I-like SAM-binding methyltransferase superfamily. TrmB family. In terms of assembly, monomer.

It carries out the reaction guanosine(46) in tRNA + S-adenosyl-L-methionine = N(7)-methylguanosine(46) in tRNA + S-adenosyl-L-homocysteine. It participates in tRNA modification; N(7)-methylguanine-tRNA biosynthesis. In terms of biological role, catalyzes the formation of N(7)-methylguanine at position 46 (m7G46) in tRNA. The sequence is that of tRNA (guanine-N(7)-)-methyltransferase from Yersinia pseudotuberculosis serotype I (strain IP32953).